A 226-amino-acid chain; its full sequence is Cobalt transport protein CbiM 2 (226 aa).

The next 6 membrane-spanning stretches (helical) occupy residues 6 to 26 (GFLP…VVAY), 43 to 63 (MLLG…MPSV), 75 to 95 (LGAI…VLLF), 107 to 127 (TLGA…AAVF), 135 to 155 (FPFG…TYVT), and 181 to 201 (VFAL…VVVM).

Belongs to the CbiM family. In terms of assembly, forms an energy-coupling factor (ECF) transporter complex composed of an ATP-binding protein (A component, CbiO), a transmembrane protein (T component, CbiQ) and 2 possible substrate-capture proteins (S components, CbiM and CbiN) of unknown stoichimetry.

The protein localises to the cell inner membrane. Its pathway is cofactor biosynthesis; adenosylcobalamin biosynthesis. Its function is as follows. Part of the energy-coupling factor (ECF) transporter complex CbiMNOQ involved in cobalt import. The sequence is that of Cobalt transport protein CbiM 2 from Pelobacter propionicus (strain DSM 2379 / NBRC 103807 / OttBd1).